The chain runs to 190 residues: MSGKWRLVLTGIGNPEPQYAGTRHNVGLYMLELLRKRLGLQGRTYSPVPNTGGKVHYIEDEHCTILRSDGQYMNLSGEQVCKVWARYAKYQARHVVIHDELSVACGKVQLRAPSTSIRGHNGLRSLLKCSGGRVPFAKLAIGIGREPGSRSRDPASVSRWVLGALTPQELQTLLTQSEPAAWRALTQYIS.

Tyr19 lines the tRNA pocket. Residue His24 is the Proton acceptor of the active site. TRNA is bound by residues Tyr72, Asn74, and Asn121.

It belongs to the PTH family.

It localises to the mitochondrion. It carries out the reaction an N-acyl-L-alpha-aminoacyl-tRNA + H2O = an N-acyl-L-amino acid + a tRNA + H(+). Peptidyl-tRNA hydrolase involved in the recycling of tRNA-Lys from diacetyl-lysyl-tRNA-Lys and is important for mitochondrial function. The sequence is that of Peptidyl-tRNA hydrolase (PTH1) from Saccharomyces cerevisiae (strain ATCC 204508 / S288c) (Baker's yeast).